A 75-amino-acid polypeptide reads, in one-letter code: UPF0352 protein YejL (75 aa).

The protein belongs to the UPF0352 family.

The chain is UPF0352 protein YejL from Salmonella arizonae (strain ATCC BAA-731 / CDC346-86 / RSK2980).